We begin with the raw amino-acid sequence, 707 residues long: D-(-)-3-hydroxybutyrate oligomer hydrolase (707 aa).

Positions 1–32 are cleaved as a signal peptide; it reads MASVFKVRSASGHVPVVRTLAAMMAVTVVLTA. The active-site Charge relay system is the Ser321.

This sequence belongs to the D-(-)-3-hydroxybutyrate oligomer hydrolase family.

It is found in the secreted. The catalysed reaction is (3R)-hydroxybutanoate dimer + H2O = 2 (R)-3-hydroxybutanoate + H(+). It functions in the pathway lipid metabolism; butanoate metabolism. Its function is as follows. Participates in the degradation of poly-3-hydroxybutyrate (PHB). It works downstream of poly(3-hydroxybutyrate) depolymerase, hydrolyzing D(-)-3-hydroxybutyrate oligomers of various length (3HB-oligomers) into 3HB-monomers. This chain is D-(-)-3-hydroxybutyrate oligomer hydrolase, found in Paraburkholderia xenovorans (strain LB400).